Consider the following 62-residue polypeptide: Small ribosomal subunit protein eS27 (62 aa).

4 residues coordinate Zn(2+): C17, C20, C36, and C39. The segment at 17–39 adopts a C4-type zinc-finger fold; it reads CPDCENEQTIFDRACTPVDCIVC.

It belongs to the eukaryotic ribosomal protein eS27 family. Part of the 30S ribosomal subunit. Zn(2+) serves as cofactor.

The protein is Small ribosomal subunit protein eS27 of Methanospirillum hungatei JF-1 (strain ATCC 27890 / DSM 864 / NBRC 100397 / JF-1).